Reading from the N-terminus, the 234-residue chain is Triosephosphate isomerase (234 aa).

8 to 10 (NFK) is a substrate binding site. Residue His90 is the Electrophile of the active site. The Proton acceptor role is filled by Glu159. Residues Gly165 and Ser197 each contribute to the substrate site.

This sequence belongs to the triosephosphate isomerase family. In terms of assembly, homodimer.

It is found in the cytoplasm. It carries out the reaction D-glyceraldehyde 3-phosphate = dihydroxyacetone phosphate. It participates in carbohydrate biosynthesis; gluconeogenesis. Its pathway is carbohydrate degradation; glycolysis; D-glyceraldehyde 3-phosphate from glycerone phosphate: step 1/1. Functionally, involved in the gluconeogenesis. Catalyzes stereospecifically the conversion of dihydroxyacetone phosphate (DHAP) to D-glyceraldehyde-3-phosphate (G3P). The protein is Triosephosphate isomerase of Helicobacter pylori (strain Shi470).